We begin with the raw amino-acid sequence, 149 residues long: uncharacterized protein (149 aa).

2 disordered regions span residues 24 to 74 (TSQG…NDLE) and 129 to 149 (AIQDDAGIPNPEMPKSAPRAP). Basic and acidic residues predominate over residues 28 to 42 (EDVKPEPKPEVDEKV). Residues 102 to 131 (SELESLKEKVSSATSMEELREIMEEFRAIQ) are a coiled coil.

This is an uncharacterized protein from Archaeoglobus fulgidus (strain ATCC 49558 / DSM 4304 / JCM 9628 / NBRC 100126 / VC-16).